Reading from the N-terminus, the 324-residue chain is NADH-ubiquinone oxidoreductase chain 1 (324 aa).

Transmembrane regions (helical) follow at residues 3-23, 77-97, 104-124, 150-170, 174-194, 226-246, 250-270, and 297-317; these read FILS…SVAF, ISPI…PFFV, LGGL…MVAG, LALI…IYFF, IYMW…TISL, LIFM…CVIF, DVFN…FIWA, and YLLF…WIFF.

This sequence belongs to the complex I subunit 1 family.

It is found in the mitochondrion inner membrane. The enzyme catalyses a ubiquinone + NADH + 5 H(+)(in) = a ubiquinol + NAD(+) + 4 H(+)(out). Core subunit of the mitochondrial membrane respiratory chain NADH dehydrogenase (Complex I) that is believed to belong to the minimal assembly required for catalysis. Complex I functions in the transfer of electrons from NADH to the respiratory chain. The immediate electron acceptor for the enzyme is believed to be ubiquinone. The protein is NADH-ubiquinone oxidoreductase chain 1 (mt:ND1) of Drosophila yakuba (Fruit fly).